The sequence spans 93 residues: HssA/B-like protein 23 (93 aa).

Belongs to the hssA/B family.

This chain is HssA/B-like protein 23 (hssl23), found in Dictyostelium discoideum (Social amoeba).